Consider the following 127-residue polypeptide: Aspartate 1-decarboxylase (127 aa).

The active-site Schiff-base intermediate with substrate; via pyruvic acid is S25. The residue at position 25 (S25) is a Pyruvic acid (Ser). T57 is a substrate binding site. Y58 (proton donor) is an active-site residue. A substrate-binding site is contributed by G73–A75.

This sequence belongs to the PanD family. Heterooctamer of four alpha and four beta subunits. Pyruvate is required as a cofactor. Post-translationally, is synthesized initially as an inactive proenzyme, which is activated by self-cleavage at a specific serine bond to produce a beta-subunit with a hydroxyl group at its C-terminus and an alpha-subunit with a pyruvoyl group at its N-terminus.

It is found in the cytoplasm. The catalysed reaction is L-aspartate + H(+) = beta-alanine + CO2. It participates in cofactor biosynthesis; (R)-pantothenate biosynthesis; beta-alanine from L-aspartate: step 1/1. In terms of biological role, catalyzes the pyruvoyl-dependent decarboxylation of aspartate to produce beta-alanine. The sequence is that of Aspartate 1-decarboxylase from Bacillus cereus (strain G9842).